The sequence spans 344 residues: Heat-inducible transcription repressor HrcA (344 aa).

This sequence belongs to the HrcA family.

Functionally, negative regulator of class I heat shock genes (grpE-dnaK-dnaJ and groELS operons). Prevents heat-shock induction of these operons. In Streptococcus sanguinis (strain SK36), this protein is Heat-inducible transcription repressor HrcA.